Here is a 238-residue protein sequence, read N- to C-terminus: NAD-dependent protein deacylase (238 aa).

The 237-residue stretch at 1–237 (MRGIMKVFVL…PAWVERLLAR (237 aa)) folds into the Deacetylase sirtuin-type domain. 12–31 (GAGVSAESGLGTFRDKDGVW) contacts NAD(+). Substrate contacts are provided by tyrosine 56 and arginine 59. NAD(+) is bound at residue 94–97 (QNVD). The active-site Proton acceptor is histidine 112. Zn(2+) is bound by residues cysteine 120, cysteine 123, cysteine 139, and cysteine 142. Residues 179-181 (GTS), 205-207 (NLE), and alanine 223 each bind NAD(+).

This sequence belongs to the sirtuin family. Class III subfamily. The cofactor is Zn(2+).

Its subcellular location is the cytoplasm. It catalyses the reaction N(6)-acetyl-L-lysyl-[protein] + NAD(+) + H2O = 2''-O-acetyl-ADP-D-ribose + nicotinamide + L-lysyl-[protein]. The catalysed reaction is N(6)-succinyl-L-lysyl-[protein] + NAD(+) + H2O = 2''-O-succinyl-ADP-D-ribose + nicotinamide + L-lysyl-[protein]. Functionally, NAD-dependent lysine deacetylase and desuccinylase that specifically removes acetyl and succinyl groups on target proteins. Modulates the activities of several proteins which are inactive in their acylated form. In Caulobacter vibrioides (strain ATCC 19089 / CIP 103742 / CB 15) (Caulobacter crescentus), this protein is NAD-dependent protein deacylase.